Reading from the N-terminus, the 59-residue chain is Large ribosomal subunit protein uL30 (59 aa).

This sequence belongs to the universal ribosomal protein uL30 family. Part of the 50S ribosomal subunit.

The sequence is that of Large ribosomal subunit protein uL30 from Clostridium kluyveri (strain ATCC 8527 / DSM 555 / NBRC 12016 / NCIMB 10680 / K1).